Reading from the N-terminus, the 312-residue chain is Pseudouridine-5'-phosphate glycosidase 2 (312 aa).

The active-site Proton donor is Glu31. 2 residues coordinate substrate: Lys93 and Val113. Asp145 serves as a coordination point for Mn(2+). Residue 147-149 (SAD) coordinates substrate. The active-site Nucleophile is Lys166.

The protein belongs to the pseudouridine-5'-phosphate glycosidase family. Homotrimer. The cofactor is Mn(2+).

The catalysed reaction is D-ribose 5-phosphate + uracil = psi-UMP + H2O. Its function is as follows. Catalyzes the reversible cleavage of pseudouridine 5'-phosphate (PsiMP) to ribose 5-phosphate and uracil. Functions biologically in the cleavage direction, as part of a pseudouridine degradation pathway. The polypeptide is Pseudouridine-5'-phosphate glycosidase 2 (Photorhabdus laumondii subsp. laumondii (strain DSM 15139 / CIP 105565 / TT01) (Photorhabdus luminescens subsp. laumondii)).